The sequence spans 436 residues: Ribosome biogenesis protein WDR12 homolog (436 aa).

The interval 13–97 is ubiquitin-like (UBL) domain; it reads VRVRFLTKLP…ERVLELEYVK (85 aa). WD repeat units follow at residues 109-147, 149-193, 203-242, 273-311, 313-353, 359-399, and 402-436; these read PHDDWVSAVDGSNPSFVLTGCYDGLARIWRDASECTHIL, GHSD…SVPK, GHTSSVQSVAVDPSTNMICSGSWDNSIKLWSVEGSEEDGD, GHTQCVSAVTWPERQTIYSASWDHSVRQWDVQTGKETWN, VSGK…TLAP, SHKS…PLAS, and SHKDKVLCADWWKGDSVISGGADSKLCIASGIEIV. The interval 240–262 is disordered; the sequence is DGDTVSVKKRRTNSDSSGPEESL.

This sequence belongs to the WD repeat WDR12/YTM1 family.

The protein localises to the nucleus. The protein resides in the nucleolus. It is found in the nucleoplasm. Its function is as follows. Required for maturation of ribosomal RNAs and formation of the large ribosomal subunit. The protein is Ribosome biogenesis protein WDR12 homolog of Oryza sativa subsp. japonica (Rice).